The sequence spans 100 residues: NADH-quinone oxidoreductase subunit K (100 aa).

Helical transmembrane passes span 3–23 (LNAYLVLAAMLFTIGVFGIFL), 29–49 (ISIMMSIELMLLAVNINFVAF), and 60–80 (IFTFFVVTVAAAEAAIGLAIL).

The protein belongs to the complex I subunit 4L family. As to quaternary structure, NDH-1 is composed of 14 different subunits. Subunits NuoA, H, J, K, L, M, N constitute the membrane sector of the complex.

It is found in the cell inner membrane. It carries out the reaction a quinone + NADH + 5 H(+)(in) = a quinol + NAD(+) + 4 H(+)(out). Functionally, NDH-1 shuttles electrons from NADH, via FMN and iron-sulfur (Fe-S) centers, to quinones in the respiratory chain. The immediate electron acceptor for the enzyme in this species is believed to be ubiquinone. Couples the redox reaction to proton translocation (for every two electrons transferred, four hydrogen ions are translocated across the cytoplasmic membrane), and thus conserves the redox energy in a proton gradient. This is NADH-quinone oxidoreductase subunit K from Magnetococcus marinus (strain ATCC BAA-1437 / JCM 17883 / MC-1).